The chain runs to 824 residues: Dapper 1 (824 aa).

Disordered regions lie at residues methionine 1–arginine 34, alanine 61–proline 80, glutamate 131–glycine 150, threonine 454–glutamine 487, and alanine 516–glutamine 536. An interaction with tcf7l1 region spans residues lysine 2–serine 343. Basic and acidic residues predominate over residues leucine 11–arginine 34. Positions arginine 19–leucine 47 form a coiled coil. Over residues phenylalanine 520–serine 530 the composition is skewed to basic and acidic residues. Residues methionine 821–valine 824 carry the PDZ-binding motif.

It belongs to the dapper family. As to quaternary structure, interacts with dbf4, dvl2 and tcf7l1.

It is found in the cytoplasm. Its subcellular location is the nucleus. In terms of biological role, involved in regulation of intracellular signaling pathways during development. Specifically thought to play a role in canonical and/or non-canonical Wnt signaling pathways through interaction with DSH (Dishevelled) family proteins. Binds to dvl2 and regulates the degradation of ctnnb1/beta-catenin, thereby modulating the transcriptional activation of target genes of the Wnt signaling pathway. May also bind to and directly stimulate the activity of tcf7l1. In Xenopus tropicalis (Western clawed frog), this protein is Dapper 1 (dact1).